Here is a 345-residue protein sequence, read N- to C-terminus: Ferrochelatase (345 aa).

His215 and Glu296 together coordinate Fe cation.

The protein belongs to the ferrochelatase family.

Its subcellular location is the cytoplasm. It catalyses the reaction heme b + 2 H(+) = protoporphyrin IX + Fe(2+). Its pathway is porphyrin-containing compound metabolism; protoheme biosynthesis; protoheme from protoporphyrin-IX: step 1/1. In terms of biological role, catalyzes the ferrous insertion into protoporphyrin IX. The polypeptide is Ferrochelatase (Rhodopseudomonas palustris (strain ATCC BAA-98 / CGA009)).